The chain runs to 179 residues: Large ribosomal subunit protein uL5 (179 aa).

It belongs to the universal ribosomal protein uL5 family. In terms of assembly, part of the 50S ribosomal subunit; part of the 5S rRNA/L5/L18/L25 subcomplex. Contacts the 5S rRNA and the P site tRNA. Forms a bridge to the 30S subunit in the 70S ribosome.

This is one of the proteins that bind and probably mediate the attachment of the 5S RNA into the large ribosomal subunit, where it forms part of the central protuberance. In the 70S ribosome it contacts protein S13 of the 30S subunit (bridge B1b), connecting the 2 subunits; this bridge is implicated in subunit movement. Contacts the P site tRNA; the 5S rRNA and some of its associated proteins might help stabilize positioning of ribosome-bound tRNAs. The protein is Large ribosomal subunit protein uL5 of Chromohalobacter salexigens (strain ATCC BAA-138 / DSM 3043 / CIP 106854 / NCIMB 13768 / 1H11).